The following is a 143-amino-acid chain: Large ribosomal subunit protein uL13 (143 aa).

It belongs to the universal ribosomal protein uL13 family. Part of the 50S ribosomal subunit.

Its function is as follows. This protein is one of the early assembly proteins of the 50S ribosomal subunit, although it is not seen to bind rRNA by itself. It is important during the early stages of 50S assembly. This is Large ribosomal subunit protein uL13 from Finegoldia magna (strain ATCC 29328 / DSM 20472 / WAL 2508) (Peptostreptococcus magnus).